Consider the following 461-residue polypeptide: tRNA modification GTPase MnmE (461 aa).

The (6S)-5-formyl-5,6,7,8-tetrahydrofolate site is built by Arg23, Glu88, and Arg127. The region spanning 223-383 is the TrmE-type G domain; sequence GLNTVIVGKP…LKECIKNLFF (161 aa). Asn233 is a K(+) binding site. Residues 233-238, 252-258, and 277-280 each bind GTP; these read NVGKSS, TEIPGTT, and DTAG. Ser237 is a binding site for Mg(2+). K(+)-binding residues include Thr252, Ile254, and Thr257. Thr258 contacts Mg(2+). Residue Lys461 participates in (6S)-5-formyl-5,6,7,8-tetrahydrofolate binding.

This sequence belongs to the TRAFAC class TrmE-Era-EngA-EngB-Septin-like GTPase superfamily. TrmE GTPase family. Homodimer. Heterotetramer of two MnmE and two MnmG subunits. The cofactor is K(+).

It is found in the cytoplasm. In terms of biological role, exhibits a very high intrinsic GTPase hydrolysis rate. Involved in the addition of a carboxymethylaminomethyl (cmnm) group at the wobble position (U34) of certain tRNAs, forming tRNA-cmnm(5)s(2)U34. The sequence is that of tRNA modification GTPase MnmE from Clostridium botulinum (strain Okra / Type B1).